A 610-amino-acid polypeptide reads, in one-letter code: Protein SAN1 (610 aa).

The segment covering 1-10 (MSESGQEQNR) has biased composition (polar residues). 2 disordered regions span residues 1-36 (MSESGQEQNRGTNTSPNNAENNNNSNAASGPLNGGA) and 176-231 (VDST…PSIP). Residues 11–36 (GTNTSPNNAENNNNSNAASGPLNGGA) are compositionally biased toward low complexity. Residues 194–203 (EGTKKRKDNE) show a composition bias toward basic and acidic residues. Residues 210-223 (TADNDSNPSITNAT) are compositionally biased toward polar residues. An RING-type zinc finger spans residues 240–280 (NDEETNPSYKHSPIKLPCGHIFGRECIYKWSRLENSCPLCR). 5 disordered regions span residues 318-348 (TAVNSTNENSSAPSENTSNTTVPTIGNASSG), 360-453 (VPQN…TDPH), 471-502 (GTSDTSATTAPGAQTVHNQGRNDSSSSDTTQG), 514-554 (GHFT…GVAS), and 569-610 (NNNS…RSSQ). Residues 319 to 348 (AVNSTNENSSAPSENTSNTTVPTIGNASSG) are compositionally biased toward polar residues. 2 stretches are compositionally biased toward low complexity: residues 384 to 406 (NGPSSTTQNPPSNSGGSNNNQSP) and 425 to 447 (PSASDSSASPSAANGPNSNNTSS). A compositionally biased stretch (polar residues) spans 471-492 (GTSDTSATTAPGAQTVHNQGRN). Low complexity predominate over residues 493–502 (DSSSSDTTQG). Composition is skewed to polar residues over residues 533–554 (QQRGGSTGENNRNNLFSSGVAS) and 592–610 (DTTIHNDVPNDNNEQRSSQ).

Its function is as follows. Plays a specific role in mating-type regulation of yeast, by acting post-translationally to control the stability or activity of the SIR4 proteins. The protein is Protein SAN1 (SAN1) of Saccharomyces cerevisiae (strain ATCC 204508 / S288c) (Baker's yeast).